The following is a 239-amino-acid chain: Small ribosomal subunit protein uS3c (239 aa).

The region spanning 43-139 (IKNYIQKNRK…RFNISIEKVK (97 aa)) is the KH type-2 domain. Residues 50–74 (NRKKGSNRKIESDSSSEVITHNRKM) form a disordered region.

Belongs to the universal ribosomal protein uS3 family. As to quaternary structure, part of the 30S ribosomal subunit.

The protein resides in the plastid. Its subcellular location is the chloroplast. This is Small ribosomal subunit protein uS3c (rps3) from Triticum aestivum (Wheat).